Here is a 486-residue protein sequence, read N- to C-terminus: Cytosol aminopeptidase (486 aa).

Zn(2+) is bound by residues lysine 249 and aspartate 254. Lysine 261 is a catalytic residue. Residues aspartate 272, aspartate 331, and glutamate 333 each coordinate Zn(2+). Arginine 335 is an active-site residue.

Belongs to the peptidase M17 family. Homohexamer. Zn(2+) serves as cofactor.

It is found in the cytoplasm. The catalysed reaction is Release of an N-terminal amino acid, Xaa-|-Yaa-, in which Xaa is preferably Leu, but may be other amino acids including Pro although not Arg or Lys, and Yaa may be Pro. Amino acid amides and methyl esters are also readily hydrolyzed, but rates on arylamides are exceedingly low.. It carries out the reaction Release of N-terminal proline from a peptide.. Presumably involved in the processing and regular turnover of intracellular proteins. Catalyzes the removal of unsubstituted N-terminal amino acids from various peptides. The polypeptide is Cytosol aminopeptidase (Encephalitozoon cuniculi (strain GB-M1) (Microsporidian parasite)).